We begin with the raw amino-acid sequence, 198 residues long: Na(+)-translocating NADH-quinone reductase subunit E (198 aa).

The next 6 helical transmembrane spans lie at 11–31 (AVFI…FLAV), 35–55 (VSPA…AVPV), 77–97 (FLNF…LEMV), 110–130 (GIFL…SFMV), 140–160 (IVYG…LAGL), and 176–196 (LGIT…FSGI).

Belongs to the NqrDE/RnfAE family. As to quaternary structure, composed of six subunits; NqrA, NqrB, NqrC, NqrD, NqrE and NqrF.

The protein localises to the cell inner membrane. It catalyses the reaction a ubiquinone + n Na(+)(in) + NADH + H(+) = a ubiquinol + n Na(+)(out) + NAD(+). In terms of biological role, NQR complex catalyzes the reduction of ubiquinone-1 to ubiquinol by two successive reactions, coupled with the transport of Na(+) ions from the cytoplasm to the periplasm. NqrA to NqrE are probably involved in the second step, the conversion of ubisemiquinone to ubiquinol. In Haemophilus influenzae (strain ATCC 51907 / DSM 11121 / KW20 / Rd), this protein is Na(+)-translocating NADH-quinone reductase subunit E.